Reading from the N-terminus, the 232-residue chain is Floral homeotic protein APETALA 3 (232 aa).

The 55-residue stretch at 3-57 (RGKIQIKRIENQTNRQVTYSKRRNGLFKKAHELTVLCDARVSIIMFSSSNKLHEY) folds into the MADS-box domain. A coiled-coil region spans residues 75–164 (SDVDVWATQY…KSQQDIQKNL (90 aa)). Residues 84–174 (YERMQETKRK…IHELELRAED (91 aa)) form the K-box domain.

In terms of assembly, forms a heterodimer with PISTILLATA, capable of binding to CArG-box sequences. AP3/PI heterodimer binds AP1 or SEP3 to form complexes. In terms of tissue distribution, expressed in petals and stamens.

The protein resides in the nucleus. Its function is as follows. Probable transcription factor involved in the genetic control of flower development. Is required for normal development of petals and stamens in the wild-type flower. Forms a heterodimer with PISTILLATA that is required for autoregulation of both AP3 and PI genes. AP3/PI heterodimer interacts with APETALA1 or SEPALLATA3 to form a ternary complex that could be responsible for the regulation of the genes involved in the flower development. AP3/PI heterodimer activates the expression of NAP. AP3/PI prevents GATA22/GNL and GATA21/GNC expression. The chain is Floral homeotic protein APETALA 3 (AP3) from Arabidopsis thaliana (Mouse-ear cress).